The primary structure comprises 83 residues: Protein FAM240A (83 aa).

It belongs to the FAM240 family.

This chain is Protein FAM240A, found in Homo sapiens (Human).